Here is a 435-residue protein sequence, read N- to C-terminus: MSGTNYRTLAIVGSQWGDEGKGKITDYFAQQADLIVRWAGGDNAGHTIVIKRNKYKLSIVPSGAFNKKSMNVIGMVVVVNLRKLSYGNWVIYKQHGFDLLKNLRISDRVHLIFPYHMKIDELQEEYRQKDSIGTTKKGIGPCYQDKAERIGIRLGDLFDEKGFLQKLENNLKFKNEVLQKFLIVKDLTKINLKRIFWHYFQQIKSLVTDTSILVDNAIHNHQKFYLKEAQGVMLDLDHGTYPFVTSSNPTASSIPVGVGIAPRYINNVLGIVKAYNTRVGTGPFPSEIFGEVETYIREAGHEYGTVSGRARWIGWFDGILMKHSRELVVILVWLIMLLDVLTTIKELKICVGYEYQGQQIDYVPSTIKEYEMCKPILITMPGWDEDISNVTTFEGLPHNAQQYLMKLEEIVGVPISLFSVGPDREQTILMNKEIF.

GTP-binding positions include Gly17–Lys23 and Gly45–Thr47. Asp18 serves as the catalytic Proton acceptor. 2 residues coordinate Mg(2+): Asp18 and Gly45. IMP-binding positions include Asp18 to Lys21, Asn43 to His46, Thr135, Arg149, Gln230, Thr245, and Arg309. His46 acts as the Proton donor in catalysis. Thr305–Arg311 contacts substrate. Residues Arg311, Leu337 to Asp339, and Ser419 to Gly421 contribute to the GTP site.

This sequence belongs to the adenylosuccinate synthetase family. In terms of assembly, homodimer. Requires Mg(2+) as cofactor.

It localises to the cytoplasm. It carries out the reaction IMP + L-aspartate + GTP = N(6)-(1,2-dicarboxyethyl)-AMP + GDP + phosphate + 2 H(+). The protein operates within purine metabolism; AMP biosynthesis via de novo pathway; AMP from IMP: step 1/2. Plays an important role in the de novo pathway of purine nucleotide biosynthesis. Catalyzes the first committed step in the biosynthesis of AMP from IMP. The protein is Adenylosuccinate synthetase of Spiroplasma citri.